Consider the following 100-residue polypeptide: Large ribosomal subunit protein eL21 (100 aa).

The segment at 1-21 (MVKRTHGYRYKSRKLLRKKPR) is disordered.

Belongs to the eukaryotic ribosomal protein eL21 family.

The polypeptide is Large ribosomal subunit protein eL21 (Pyrobaculum islandicum (strain DSM 4184 / JCM 9189 / GEO3)).